A 297-amino-acid polypeptide reads, in one-letter code: Probable endonuclease 4 (297 aa).

Residues histidine 69, histidine 110, glutamate 145, aspartate 179, histidine 182, histidine 214, aspartate 227, histidine 229, and glutamate 259 each coordinate Zn(2+).

The protein belongs to the AP endonuclease 2 family. Zn(2+) is required as a cofactor.

The enzyme catalyses Endonucleolytic cleavage to 5'-phosphooligonucleotide end-products.. Endonuclease IV plays a role in DNA repair. It cleaves phosphodiester bonds at apurinic or apyrimidinic (AP) sites, generating a 3'-hydroxyl group and a 5'-terminal sugar phosphate. In Listeria welshimeri serovar 6b (strain ATCC 35897 / DSM 20650 / CCUG 15529 / CIP 8149 / NCTC 11857 / SLCC 5334 / V8), this protein is Probable endonuclease 4.